A 463-amino-acid polypeptide reads, in one-letter code: Glutamate--tRNA ligase 1 (463 aa).

Residues 10 to 20 carry the 'HIGH' region motif; the sequence is PSPTGFLHIGS. Residues 239–243 carry the 'KMSKS' region motif; the sequence is KLSKR. Lys242 is a binding site for ATP.

It belongs to the class-I aminoacyl-tRNA synthetase family. Glutamate--tRNA ligase type 1 subfamily. As to quaternary structure, monomer.

It is found in the cytoplasm. The catalysed reaction is tRNA(Glu) + L-glutamate + ATP = L-glutamyl-tRNA(Glu) + AMP + diphosphate. Its function is as follows. Catalyzes the attachment of glutamate to tRNA(Glu) in a two-step reaction: glutamate is first activated by ATP to form Glu-AMP and then transferred to the acceptor end of tRNA(Glu). This chain is Glutamate--tRNA ligase 1, found in Rickettsia canadensis (strain McKiel).